Reading from the N-terminus, the 326-residue chain is Beta-ketoacyl-[acyl-carrier-protein] synthase III (326 aa).

Active-site residues include cysteine 112 and histidine 251. Residues 252 to 256 (QANSR) are ACP-binding. Asparagine 281 is an active-site residue.

It belongs to the thiolase-like superfamily. FabH family. As to quaternary structure, homodimer.

Its subcellular location is the cytoplasm. The catalysed reaction is malonyl-[ACP] + acetyl-CoA + H(+) = 3-oxobutanoyl-[ACP] + CO2 + CoA. It participates in lipid metabolism; fatty acid biosynthesis. Functionally, catalyzes the condensation reaction of fatty acid synthesis by the addition to an acyl acceptor of two carbons from malonyl-ACP. Catalyzes the first condensation reaction which initiates fatty acid synthesis and may therefore play a role in governing the total rate of fatty acid production. Possesses both acetoacetyl-ACP synthase and acetyl transacylase activities. Its substrate specificity determines the biosynthesis of branched-chain and/or straight-chain of fatty acids. This is Beta-ketoacyl-[acyl-carrier-protein] synthase III from Clostridium botulinum (strain Langeland / NCTC 10281 / Type F).